The chain runs to 255 residues: Putative glycyl-radical enzyme activating enzyme MJ1632 (255 aa).

In terms of domain architecture, Radical SAM core spans 30 to 245 (SHISLSDKIT…SNVSCSLDFK (216 aa)). 3 residues coordinate [4Fe-4S] cluster: C45, C49, and C52. S-adenosyl-L-methionine-binding positions include 51–53 (YCF), G88, and 134–136 (DLK).

Belongs to the organic radical-activating enzymes family. The cofactor is [4Fe-4S] cluster.

The enzyme catalyses glycyl-[protein] + reduced [flavodoxin] + S-adenosyl-L-methionine = glycin-2-yl radical-[protein] + semiquinone [flavodoxin] + 5'-deoxyadenosine + L-methionine + H(+). This chain is Putative glycyl-radical enzyme activating enzyme MJ1632, found in Methanocaldococcus jannaschii (strain ATCC 43067 / DSM 2661 / JAL-1 / JCM 10045 / NBRC 100440) (Methanococcus jannaschii).